The primary structure comprises 359 residues: 3-dehydroquinate synthase (359 aa).

NAD(+) is bound by residues 72 to 77 (DGEHYK), 106 to 110 (GVIGD), 130 to 131 (TT), Lys-143, and Lys-152. Residues Glu-185, His-248, and His-265 each coordinate Zn(2+).

The protein belongs to the sugar phosphate cyclases superfamily. Dehydroquinate synthase family. Co(2+) serves as cofactor. It depends on Zn(2+) as a cofactor. NAD(+) is required as a cofactor.

The protein resides in the cytoplasm. The enzyme catalyses 7-phospho-2-dehydro-3-deoxy-D-arabino-heptonate = 3-dehydroquinate + phosphate. The protein operates within metabolic intermediate biosynthesis; chorismate biosynthesis; chorismate from D-erythrose 4-phosphate and phosphoenolpyruvate: step 2/7. Catalyzes the conversion of 3-deoxy-D-arabino-heptulosonate 7-phosphate (DAHP) to dehydroquinate (DHQ). In Thermodesulfovibrio yellowstonii (strain ATCC 51303 / DSM 11347 / YP87), this protein is 3-dehydroquinate synthase.